A 307-amino-acid polypeptide reads, in one-letter code: MIEVIFLGTGGIKPTPERNVPSIAIKIGGEIILFDVGEGTLRQMEIARISPMKIKRVFITHFHGDHYLGLPALIQTMSLWKRKDPLHIYGPEGSSTFLQNLLNSGYFAPSFDILVHEISGKSRLKFKEYEVWAFEVSHGVPALGYVFKEKDKRGNFNLKKIKELGLEPGPWMKELERQKIIEINGKIVRLLEVTGPKKRGAKVVYSGDTEPCDEVIEFSRRGTLLIHEATYVNEEDRKDSYHTTIEEACEIWKKSKARKLVLFHRSPRYSFKEYKEKALSICPQAIIPRDFDRIAIEGAGDVLFKIR.

7 residues coordinate Zn(2+): His-61, His-63, Asp-65, His-66, His-138, Asp-208, and His-264. Asp-65 serves as the catalytic Proton acceptor.

The protein belongs to the RNase Z family. Homodimer. It depends on Zn(2+) as a cofactor.

It carries out the reaction Endonucleolytic cleavage of RNA, removing extra 3' nucleotides from tRNA precursor, generating 3' termini of tRNAs. A 3'-hydroxy group is left at the tRNA terminus and a 5'-phosphoryl group is left at the trailer molecule.. In terms of biological role, zinc phosphodiesterase, which displays some tRNA 3'-processing endonuclease activity. Probably involved in tRNA maturation, by removing a 3'-trailer from precursor tRNA. The chain is Ribonuclease Z from Pyrococcus horikoshii (strain ATCC 700860 / DSM 12428 / JCM 9974 / NBRC 100139 / OT-3).